A 281-amino-acid polypeptide reads, in one-letter code: 2-dehydro-3-deoxyphosphooctonate aldolase (281 aa).

Belongs to the KdsA family.

The protein resides in the cytoplasm. It carries out the reaction D-arabinose 5-phosphate + phosphoenolpyruvate + H2O = 3-deoxy-alpha-D-manno-2-octulosonate-8-phosphate + phosphate. It participates in carbohydrate biosynthesis; 3-deoxy-D-manno-octulosonate biosynthesis; 3-deoxy-D-manno-octulosonate from D-ribulose 5-phosphate: step 2/3. Its pathway is bacterial outer membrane biogenesis; lipopolysaccharide biosynthesis. The sequence is that of 2-dehydro-3-deoxyphosphooctonate aldolase from Pseudomonas putida (strain GB-1).